The sequence spans 462 residues: Indoleacetamide hydrolase (462 aa).

Active-site charge relay system residues include lysine 74 and serine 149. The Acyl-ester intermediate role is filled by serine 173.

Belongs to the amidase family.

It participates in plant hormone metabolism; auxin biosynthesis. Functionally, hydrolyzes indole-3-acetamide (IAM) into indole-3-acetic acid (IAA). This Allorhizobium ampelinum (strain ATCC BAA-846 / DSM 112012 / S4) (Agrobacterium vitis (strain S4)) protein is Indoleacetamide hydrolase (iaaH).